Reading from the N-terminus, the 490-residue chain is MNAPVDPKKLIKGGLHDWEVIVGMEIHAQVSSRAKLFSGASTEFGAEPNDHVSLVDAAMPGMLPVINAECVAQAVRTGLGLKAKINLRSVFDRKNYFYPDLPQGYQISQYKDPIVGEGEVLVDLADGASITVGIERLHLEQDAGKSLHDQDPTRSFVDLNRSGVALMEIVSRPDLRSSEEAKAYVTKLRTILRYLGTCDGDMEKGSLRADVNVSVRRPGEPLGTRCEIKNVNSIRFIGQAIETEARRQIAILEDGGTIDQETRLFDPTKGETRSMRSKEEAHDYRYFPDPDLLPLEFDQAYVDALAEGLPELPDAKKARFVSAFGLSPYDAGVLVAERASADYYEAVAKGRDGKAAANWVINELFGRLNKEGLSIEATPVSADQLGTIIDLIGEGVISGKIAKDLFEIVWTEGGDPRVVVESRGMKQVTDTGAIEAAVDQIIAANPDKVAQAKEKPTLLGWFVGQTMKATGGKANPAAVNALLKAKLGIE.

It belongs to the GatB/GatE family. GatB subfamily. In terms of assembly, heterotrimer of A, B and C subunits.

It catalyses the reaction L-glutamyl-tRNA(Gln) + L-glutamine + ATP + H2O = L-glutaminyl-tRNA(Gln) + L-glutamate + ADP + phosphate + H(+). It carries out the reaction L-aspartyl-tRNA(Asn) + L-glutamine + ATP + H2O = L-asparaginyl-tRNA(Asn) + L-glutamate + ADP + phosphate + 2 H(+). Allows the formation of correctly charged Asn-tRNA(Asn) or Gln-tRNA(Gln) through the transamidation of misacylated Asp-tRNA(Asn) or Glu-tRNA(Gln) in organisms which lack either or both of asparaginyl-tRNA or glutaminyl-tRNA synthetases. The reaction takes place in the presence of glutamine and ATP through an activated phospho-Asp-tRNA(Asn) or phospho-Glu-tRNA(Gln). The chain is Aspartyl/glutamyl-tRNA(Asn/Gln) amidotransferase subunit B from Methylobacterium radiotolerans (strain ATCC 27329 / DSM 1819 / JCM 2831 / NBRC 15690 / NCIMB 10815 / 0-1).